The chain runs to 152 residues: MADSERLSAPGCWAACTTFSRTRKGILLLAEIILCLVILICFSAGTSGYSSLSVVEMVLAIVFFVIYMCDLHTRAPFINWPWSDFFRTLIAAILYLITSIFVLVERGNHSKIAAGVLGLLATCLFGYDAYFTFPLRQQRHTAAPTDPTDGPV.

In terms of domain architecture, MARVEL spans 19-137; sequence FSRTRKGILL…DAYFTFPLRQ (119 aa). 3 consecutive transmembrane segments (helical) span residues 25–45, 48–68, and 85–105; these read GILL…FSAG, GYSS…VIYM, and FFRT…VLVE. Residue asparagine 108 is glycosylated (N-linked (GlcNAc...) asparagine). A helical membrane pass occupies residues 112-132; that stretch reads IAAGVLGLLATCLFGYDAYFT.

The protein localises to the membrane. May play a role in cell differentiation in the intestinal epithelium. The polypeptide is Proteolipid protein 2 (PLP2) (Oryctolagus cuniculus (Rabbit)).